Reading from the N-terminus, the 315-residue chain is Olfactory receptor 10A4 (315 aa).

Residues 1–26 (MMWENWTIVSEFVLVSFSALSTELQA) lie on the Extracellular side of the membrane. An N-linked (GlcNAc...) asparagine glycan is attached at Asn5. The helical transmembrane segment at 27–47 (LLFLLFLTIYLVTLMGNVLII) threads the bilayer. Over 48-55 (LVTIADSA) the chain is Cytoplasmic. Residues 56 to 76 (LQSPMYFFLRNLSFLEIGFNL) traverse the membrane as a helical segment. The Extracellular portion of the chain corresponds to 77–100 (VIVPKMLGTLIIQDTTISFLGCAT). Cys98 and Cys190 are joined by a disulfide. Residues 101–121 (QMYFFFFFGAAECCLLATMAY) traverse the membrane as a helical segment. Residues 122-140 (DRYVAICDPLHYPVIMGHI) lie on the Cytoplasmic side of the membrane. Residues 141–161 (SCAQLAAASWFSGFSVATVQT) traverse the membrane as a helical segment. The Extracellular segment spans residues 162–198 (TWIFSFPFCGPNRVNHFFCDSPPVIALVCADTSVFEL). A helical membrane pass occupies residues 199-218 (EALTATVLFILFPFLLILGS). Topologically, residues 219–238 (YVRILSTIFRMPSAEGKHQA) are cytoplasmic. The helical transmembrane segment at 239–259 (FSTCSAHLLVVSLFYSTAILT) threads the bilayer. Over 260–272 (YFRPQSSASSESK) the chain is Extracellular. The chain crosses the membrane as a helical span at residues 273–293 (KLLSLSSTVVTPMLNPIIYSS). Residues 294 to 315 (RNKEVKAALKRLIHRTLGSQKL) are Cytoplasmic-facing.

The protein belongs to the G-protein coupled receptor 1 family. Expressed in the tongue.

It is found in the cell membrane. Its function is as follows. Odorant receptor (Potential). May be involved in taste perception. This is Olfactory receptor 10A4 (OR10A4) from Homo sapiens (Human).